A 296-amino-acid polypeptide reads, in one-letter code: Thioredoxin-related transmembrane protein 2 (296 aa).

The first 48 residues, 1–48 (MAVLAPLIALVYSVPRLSRWLARPYYFLSALLSAAFLLVRKLPPVCES), serve as a signal peptide directing secretion. Residues 49 to 102 (LPTQREDGNPCDFDWREVEILMFLSAIVMMKNRRSITVEQHVGNIFMFSKVANA) lie on the Extracellular side of the membrane. A helical membrane pass occupies residues 103–125 (ILFFRLDIRMGLLYITLCIVFLM). Residues 126–296 (TCKPPLYMGP…VPDEESKKDK (171 aa)) are Cytoplasmic-facing. One can recognise a Thioredoxin domain in the interval 132–269 (YMGPEYIKYF…LYQRAKKLSK (138 aa)). 2 positions are modified to phosphoserine: Ser211 and Ser243. Residues 272–296 (DKIPEEQPVAAVPAAVPDEESKKDK) are disordered. Residues 277–287 (EQPVAAVPAAV) are compositionally biased toward low complexity. Residues 293 to 296 (KKDK) carry the Di-lysine motif motif.

As to quaternary structure, monomer. Homodimer; disulfide-linked. Occurs in both reduced and oxidized monomeric form. Oxidative conditions increase homodimerization. Interacts with CANX. Interacts with ATP2A2.

It is found in the endoplasmic reticulum membrane. The protein localises to the mitochondrion membrane. Its function is as follows. Endoplasmic reticulum and mitochondria-associated protein that probably functions as a regulator of cellular redox state and thereby regulates protein post-translational modification, protein folding and mitochondrial activity. Indirectly regulates neuronal proliferation, migration, and organization in the developing brain. The chain is Thioredoxin-related transmembrane protein 2 (TMX2) from Bos taurus (Bovine).